A 68-amino-acid chain; its full sequence is Glu S.griseus protease inhibitor (68 aa).

Ser1 bears the N-acetylserine mark. Residues Cys3 and Cys48 are joined by a disulfide bond.

This sequence belongs to the protease inhibitor I13 (potato type I serine protease inhibitor) family.

Functionally, competitively inhibits Glu S.griseus protease by forming probably a 1:1 complex. BGIA has no inhibitory activity against 2 other acidic amino acid-specific endopeptidases (S.aureus protease V8 and B.subtilis proteinase), chymotrypsin, trypsin, pancreatic elastase, and papain, although subtilisin Carlsberg was strongly inhibited. The protein is Glu S.griseus protease inhibitor of Momordica charantia (Bitter gourd).